Reading from the N-terminus, the 351-residue chain is MIPLDRLRQITERFQYLEAAMAAGDGAADIAALAKEYSDLRPVVEQISAYQQLLSDLEDAAEMLGDPDMAPLAEEEIPRLKSALPQAEAALQLALLPKDKADAKPAMLEIRPGTGGDEAALFAGDLFRMYQRYAETQGWKVDLIELQETELGGIKEVVAHIKGADVFARLKYESGVHRVQRVPSTESGGRIHTSAATVAVLPEAEDVDIHIDANDLRIDTMRSSGAGGQHVNTTDSAVRITHLPTGLVVTSSEKSQHRNREIAMQVLKARLYDLERSRVDDERSADRAAQVGSGDRSERIRTYNFPQGRMTDHRINLTLYRLDAVLQGDLDEIIDALTAHAQAQLMADMGQ.

Glutamine 229 is subject to N5-methylglutamine. Residues 278–297 form a disordered region; the sequence is RVDDERSADRAAQVGSGDRS.

Belongs to the prokaryotic/mitochondrial release factor family. Post-translationally, methylated by PrmC. Methylation increases the termination efficiency of RF1.

The protein resides in the cytoplasm. In terms of biological role, peptide chain release factor 1 directs the termination of translation in response to the peptide chain termination codons UAG and UAA. The polypeptide is Peptide chain release factor 1 (Roseobacter denitrificans (strain ATCC 33942 / OCh 114) (Erythrobacter sp. (strain OCh 114))).